The chain runs to 783 residues: ATP-dependent 6-phosphofructokinase (783 aa).

The segment covering 1 to 10 (MAPPQAPVQP) has biased composition (pro residues). A disordered region spans residues 1–20 (MAPPQAPVQPPKRRRIGVLT). The interval 1–389 (MAPPQAPVQP…YHFSYINTST (389 aa)) is N-terminal catalytic PFK domain 1. ATP-binding positions include glycine 23, 86–87 (RC), and 116–119 (GDGS). A Mg(2+)-binding site is contributed by aspartate 117. Substrate contacts are provided by residues 162-164 (SID), arginine 199, 206-208 (MGR), glutamate 263, arginine 291, and 297-300 (HTQR). Aspartate 164 serves as the catalytic Proton acceptor. Residues 390–403 (PDHPKLLLPENKRM) form an interdomain linker region. Positions 404–783 (RIGIIHVGAP…NATWSCYENA (380 aa)) are C-terminal regulatory PFK domain 2. Beta-D-fructose 2,6-bisphosphate contacts are provided by residues arginine 480, 537–541 (TISNN), arginine 575, 582–584 (QGG), glutamate 642, arginine 668, 674–677 (HFQQ), and arginine 749.

Belongs to the phosphofructokinase type A (PFKA) family. ATP-dependent PFK group I subfamily. Eukaryotic two domain clade 'E' sub-subfamily. Homotetramer. The cofactor is Mg(2+).

The protein localises to the cytoplasm. The enzyme catalyses beta-D-fructose 6-phosphate + ATP = beta-D-fructose 1,6-bisphosphate + ADP + H(+). It participates in carbohydrate degradation; glycolysis; D-glyceraldehyde 3-phosphate and glycerone phosphate from D-glucose: step 3/4. With respect to regulation, allosterically activated by ADP, AMP, or fructose 2,6-bisphosphate, and allosterically inhibited by ATP or citrate. In terms of biological role, catalyzes the phosphorylation of D-fructose 6-phosphate to fructose 1,6-bisphosphate by ATP, the first committing step of glycolysis. The chain is ATP-dependent 6-phosphofructokinase (pfkA) from Aspergillus niger.